A 223-amino-acid chain; its full sequence is Cytochrome c biogenesis ATP-binding export protein CcmA (223 aa).

The 203-residue stretch at 20–222 (LAAHALTYSR…PTRLLHLKKA (203 aa)) folds into the ABC transporter domain. 52–59 (GPNGIGKT) is a binding site for ATP.

It belongs to the ABC transporter superfamily. CcmA exporter (TC 3.A.1.107) family. As to quaternary structure, the complex is composed of two ATP-binding proteins (CcmA) and two transmembrane proteins (CcmB).

It localises to the cell inner membrane. The enzyme catalyses heme b(in) + ATP + H2O = heme b(out) + ADP + phosphate + H(+). Its function is as follows. Part of the ABC transporter complex CcmAB involved in the biogenesis of c-type cytochromes; once thought to export heme, this seems not to be the case, but its exact role is uncertain. Responsible for energy coupling to the transport system. The sequence is that of Cytochrome c biogenesis ATP-binding export protein CcmA from Xylella fastidiosa (strain 9a5c).